Here is a 243-residue protein sequence, read N- to C-terminus: Pyridoxine 5'-phosphate synthase (243 aa).

Asn-9 is a binding site for 3-amino-2-oxopropyl phosphate. Position 11-12 (11-12 (DH)) interacts with 1-deoxy-D-xylulose 5-phosphate. Arg-20 serves as a coordination point for 3-amino-2-oxopropyl phosphate. His-45 acts as the Proton acceptor in catalysis. 1-deoxy-D-xylulose 5-phosphate contacts are provided by Arg-47 and His-52. Glu-72 (proton acceptor) is an active-site residue. Thr-102 lines the 1-deoxy-D-xylulose 5-phosphate pocket. His-193 serves as the catalytic Proton donor. Residues Gly-194 and 215–216 (GH) each bind 3-amino-2-oxopropyl phosphate.

The protein belongs to the PNP synthase family. Homooctamer; tetramer of dimers.

Its subcellular location is the cytoplasm. The enzyme catalyses 3-amino-2-oxopropyl phosphate + 1-deoxy-D-xylulose 5-phosphate = pyridoxine 5'-phosphate + phosphate + 2 H2O + H(+). The protein operates within cofactor biosynthesis; pyridoxine 5'-phosphate biosynthesis; pyridoxine 5'-phosphate from D-erythrose 4-phosphate: step 5/5. Catalyzes the complicated ring closure reaction between the two acyclic compounds 1-deoxy-D-xylulose-5-phosphate (DXP) and 3-amino-2-oxopropyl phosphate (1-amino-acetone-3-phosphate or AAP) to form pyridoxine 5'-phosphate (PNP) and inorganic phosphate. This is Pyridoxine 5'-phosphate synthase from Pseudoalteromonas translucida (strain TAC 125).